A 111-amino-acid chain; its full sequence is Cell division protein FtsB (111 aa).

Residues 1-3 (MGK) are Cytoplasmic-facing. Residues 4–21 (LTLLLLILLGWLQYSLWL) traverse the membrane as a helical segment. At 22-111 (GKNGIHDYVR…TNTSSNNTQR (90 aa)) the chain is on the periplasmic side. A coiled-coil region spans residues 33 to 63 (KDDVVVQQGNNAKLKDRNEQLFAEIDDLNGG). A disordered region spans residues 88–111 (VPESNHRNANTPSSTNTSSNNTQR). A compositionally biased stretch (low complexity) spans 97–111 (NTPSSTNTSSNNTQR).

The protein belongs to the FtsB family. In terms of assembly, part of a complex composed of FtsB, FtsL and FtsQ.

The protein resides in the cell inner membrane. Functionally, essential cell division protein. May link together the upstream cell division proteins, which are predominantly cytoplasmic, with the downstream cell division proteins, which are predominantly periplasmic. This chain is Cell division protein FtsB, found in Pectobacterium atrosepticum (strain SCRI 1043 / ATCC BAA-672) (Erwinia carotovora subsp. atroseptica).